Consider the following 445-residue polypeptide: Phosphoglucosamine mutase (445 aa).

Ser-101 functions as the Phosphoserine intermediate in the catalytic mechanism. Mg(2+) contacts are provided by Ser-101, Asp-240, Asp-242, and Asp-244. Position 101 is a phosphoserine (Ser-101).

This sequence belongs to the phosphohexose mutase family. Requires Mg(2+) as cofactor. In terms of processing, activated by phosphorylation.

The enzyme catalyses alpha-D-glucosamine 1-phosphate = D-glucosamine 6-phosphate. In terms of biological role, catalyzes the conversion of glucosamine-6-phosphate to glucosamine-1-phosphate. In Pseudomonas fluorescens (strain ATCC BAA-477 / NRRL B-23932 / Pf-5), this protein is Phosphoglucosamine mutase.